The chain runs to 530 residues: GMP synthase [glutamine-hydrolyzing] (530 aa).

In terms of domain architecture, Glutamine amidotransferase type-1 spans arginine 4 to aspartate 205. Cysteine 84 serves as the catalytic Nucleophile. Catalysis depends on residues histidine 179 and glutamate 181. A GMPS ATP-PPase domain is found at tryptophan 206–arginine 398. Serine 233 to leucine 239 contacts ATP.

Homodimer.

It carries out the reaction XMP + L-glutamine + ATP + H2O = GMP + L-glutamate + AMP + diphosphate + 2 H(+). Its pathway is purine metabolism; GMP biosynthesis; GMP from XMP (L-Gln route): step 1/1. Its function is as follows. Catalyzes the synthesis of GMP from XMP. This Bordetella parapertussis (strain 12822 / ATCC BAA-587 / NCTC 13253) protein is GMP synthase [glutamine-hydrolyzing].